The primary structure comprises 440 residues: Replication factor C large subunit (440 aa).

Residue 48–55 coordinates ATP; that stretch reads GPPGVGKT.

This sequence belongs to the activator 1 small subunits family. RfcL subfamily. In terms of assembly, heteromultimer composed of small subunits (RfcS) and large subunits (RfcL).

Part of the RFC clamp loader complex which loads the PCNA sliding clamp onto DNA. The sequence is that of Replication factor C large subunit from Sulfurisphaera tokodaii (strain DSM 16993 / JCM 10545 / NBRC 100140 / 7) (Sulfolobus tokodaii).